Reading from the N-terminus, the 232-residue chain is Orotate phosphoribosyltransferase (232 aa).

K28 is a binding site for 5-phospho-alpha-D-ribose 1-diphosphate. 36–37 contacts orotate; the sequence is FF. Residues 78–79, R108, K109, K112, H114, and 134–142 contribute to the 5-phospho-alpha-D-ribose 1-diphosphate site; these read YK and DDVITAGTA. The orotate site is built by T138 and R166.

The protein belongs to the purine/pyrimidine phosphoribosyltransferase family. PyrE subfamily. Homodimer.

It catalyses the reaction orotidine 5'-phosphate + diphosphate = orotate + 5-phospho-alpha-D-ribose 1-diphosphate. The protein operates within pyrimidine metabolism; UMP biosynthesis via de novo pathway; UMP from orotate: step 1/2. In terms of biological role, catalyzes the transfer of a ribosyl phosphate group from 5-phosphoribose 1-diphosphate to orotate, leading to the formation of orotidine monophosphate (OMP). This chain is Orotate phosphoribosyltransferase (URA5), found in Sordaria macrospora.